The following is a 350-amino-acid chain: tRNA N6-adenosine threonylcarbamoyltransferase (350 aa).

Histidine 109 and histidine 113 together coordinate Fe cation. Substrate is bound by residues 136–140 (TVSGG), aspartate 169, glycine 182, aspartate 186, and asparagine 284. A Fe cation-binding site is contributed by aspartate 312.

Belongs to the KAE1 / TsaD family. Fe(2+) serves as cofactor.

It localises to the cytoplasm. The catalysed reaction is L-threonylcarbamoyladenylate + adenosine(37) in tRNA = N(6)-L-threonylcarbamoyladenosine(37) in tRNA + AMP + H(+). In terms of biological role, required for the formation of a threonylcarbamoyl group on adenosine at position 37 (t(6)A37) in tRNAs that read codons beginning with adenine. Is involved in the transfer of the threonylcarbamoyl moiety of threonylcarbamoyl-AMP (TC-AMP) to the N6 group of A37, together with TsaE and TsaB. TsaD likely plays a direct catalytic role in this reaction. The protein is tRNA N6-adenosine threonylcarbamoyltransferase of Pelodictyon phaeoclathratiforme (strain DSM 5477 / BU-1).